The following is a 368-amino-acid chain: Histidinol-phosphate aminotransferase (368 aa).

At K228 the chain carries N6-(pyridoxal phosphate)lysine.

This sequence belongs to the class-II pyridoxal-phosphate-dependent aminotransferase family. Histidinol-phosphate aminotransferase subfamily. The cofactor is pyridoxal 5'-phosphate.

The enzyme catalyses L-histidinol phosphate + 2-oxoglutarate = 3-(imidazol-4-yl)-2-oxopropyl phosphate + L-glutamate. It participates in amino-acid biosynthesis; L-histidine biosynthesis; L-histidine from 5-phospho-alpha-D-ribose 1-diphosphate: step 7/9. The protein is Histidinol-phosphate aminotransferase of Methanosarcina mazei (strain ATCC BAA-159 / DSM 3647 / Goe1 / Go1 / JCM 11833 / OCM 88) (Methanosarcina frisia).